Consider the following 390-residue polypeptide: Precorrin-6Y C(5,15)-methyltransferase [decarboxylating] (390 aa).

It belongs to the precorrin methyltransferase family.

It carries out the reaction precorrin-6B + 2 S-adenosyl-L-methionine = precorrin-8X + 2 S-adenosyl-L-homocysteine + CO2 + 3 H(+). It participates in cofactor biosynthesis; adenosylcobalamin biosynthesis; cob(II)yrinate a,c-diamide from precorrin-2 (aerobic route): step 7/10. Catalyzes the methylation of both C-5 and C-15 in precorrin-6Y to form precorrin-8X. In Mycobacterium tuberculosis (strain ATCC 25618 / H37Rv), this protein is Precorrin-6Y C(5,15)-methyltransferase [decarboxylating] (cobL).